The sequence spans 376 residues: ATP phosphoribosyltransferase regulatory subunit (376 aa).

It belongs to the class-II aminoacyl-tRNA synthetase family. HisZ subfamily. Heteromultimer composed of HisG and HisZ subunits.

The protein localises to the cytoplasm. The protein operates within amino-acid biosynthesis; L-histidine biosynthesis; L-histidine from 5-phospho-alpha-D-ribose 1-diphosphate: step 1/9. In terms of biological role, required for the first step of histidine biosynthesis. May allow the feedback regulation of ATP phosphoribosyltransferase activity by histidine. The chain is ATP phosphoribosyltransferase regulatory subunit from Brucella canis (strain ATCC 23365 / NCTC 10854 / RM-666).